The sequence spans 346 residues: PPE family protein PPE17 (346 aa).

The interval phenylalanine 6–alanine 159 is PPE.

It belongs to the mycobacterial PPE family. Interacts with LRR motifs 15-20 of host Toll-like receptor 2 (TLR2).

It localises to the secreted. The protein resides in the cell wall. It is found in the cell surface. Functionally, induces pro-inflammatory responses. Induces host TLR1/2 heterodimerization, which causes an increased recruitment of IRAK1, MYD88, and protein kinase C epsilon (PRKCE) to the downstream TLR-signaling complex that translocates PRKCE into the nucleus in an IRAK1-dependent manner. PRKCE-mediated phosphorylation allowed the nuclear IRAK3 to be exported to the cytoplasm, leading to increased activation of ERK1/2, stabilization of MAPK phosphatase 1 (MKP1), and induction of TNF-alpha with concomitant down-regulation of MAP kinase p38. Its function is as follows. During M.tuberculosis and HIV-1 co-infection, can stimulate transcription from the long terminal repeat (LTR) of HIV-1 in monocyte/macrophage cells. Interaction with human TLR2 activates the NF-kappa-B transcription factor, which binds to the promoter region of the HIV-1 and induces HIV-1 gene expression. This Mycobacterium tuberculosis (strain ATCC 25618 / H37Rv) protein is PPE family protein PPE17 (PPE17).